The primary structure comprises 100 residues: uncharacterized protein (100 aa).

This is an uncharacterized protein from Caenorhabditis elegans.